Reading from the N-terminus, the 54-residue chain is Apelin receptor early endogenous ligand (54 aa).

A signal peptide spans 1 to 25; it reads MRFQPLFWVFFIFAMSLLFITEEKS.

Belongs to the Elabela/Toddler family. Interacts with APLNR.

The protein localises to the secreted. It localises to the extracellular space. In terms of biological role, peptide hormone that functions as endogenous ligand for the G-protein-coupled apelin receptor (APLNR/APJ), that plays a role in the regulation of normal cardiovascular function and fluid homeostasis. Functions as a balanced agonist activating both G(i) protein pathway and beta-arrestin pathway of APLNR. Downstream G proteins activation, apelin can inhibit cAMP production and activate key intracellular effectors such as ERKs. On the other hand, APLNR activation induces beta-arrestin recruitment to the membrane leading to desensitization and internalization of the receptor. Required for mesendodermal differentiation, blood vessels formation and heart morphogenesis during early development and for adult cardiovascular homeostasis. Acts as a motogen by promoting mesendodermal cell migration during gastrulation by binding and activating APLNR. Acts as an early embryonic regulator of cellular movement with a role in migration and development of cardiac progenitor cells. May act as a chemoattractant for the activation of angioblast migration toward the embryonic midline, i.e. the position of the future vessel formation, during vasculogenesis. Positively regulates sinus venosus (SV)-derived endothelial cells migration into the developing heart to promote coronary blood vessel sprouting. Plays a role in placental vascular development; promotes placental trophoblast invasion and spiral artery remodeling in the uterus. Involved in the regulation of maternal cardiovascular homeostasis to prevent gestational hypertension and for potent cardioprotective functions during heart failure. Mediates myocardial contractility in an ERK1/2-dependent manner. The sequence is that of Apelin receptor early endogenous ligand from Rattus norvegicus (Rat).